The primary structure comprises 318 residues: NADH-ubiquinone oxidoreductase chain 1 (318 aa).

8 helical membrane-spanning segments follow: residues 2–22 (FMIN…FLTL), 68–88 (ISMF…MWTP), 100–120 (LGIL…LWSG), 146–166 (LAII…PTLI), 171–191 (HIWL…STLA), 222–242 (LFFL…TILF), 253–273 (ELYT…FLWV), and 293–313 (FLPL…ITAG).

Belongs to the complex I subunit 1 family. As to quaternary structure, core subunit of respiratory chain NADH dehydrogenase (Complex I) which is composed of 45 different subunits.

Its subcellular location is the mitochondrion inner membrane. It carries out the reaction a ubiquinone + NADH + 5 H(+)(in) = a ubiquinol + NAD(+) + 4 H(+)(out). In terms of biological role, core subunit of the mitochondrial membrane respiratory chain NADH dehydrogenase (Complex I) which catalyzes electron transfer from NADH through the respiratory chain, using ubiquinone as an electron acceptor. Essential for the catalytic activity and assembly of complex I. This Hipposideros armiger terasensis (Formosan leaf-nosed bat) protein is NADH-ubiquinone oxidoreductase chain 1 (MT-ND1).